A 323-amino-acid polypeptide reads, in one-letter code: Ferrochelatase (323 aa).

2 residues coordinate Fe cation: His196 and Glu277.

The protein belongs to the ferrochelatase family.

Its subcellular location is the cytoplasm. The catalysed reaction is heme b + 2 H(+) = protoporphyrin IX + Fe(2+). It functions in the pathway porphyrin-containing compound metabolism; protoheme biosynthesis; protoheme from protoporphyrin-IX: step 1/1. Functionally, catalyzes the ferrous insertion into protoporphyrin IX. This is Ferrochelatase from Haemophilus influenzae (strain PittEE).